Consider the following 372-residue polypeptide: Phospho-N-acetylmuramoyl-pentapeptide-transferase (372 aa).

Helical transmembrane passes span 2-22 (LVWL…VSSL), 71-91 (TPTM…LLWA), 98-118 (VWIL…DDWL), 134-154 (YFWL…IATL), 176-196 (MIPF…YFVI), 211-231 (GLAI…AYVS), 251-271 (VIIV…FNAH), 275-295 (VFMG…IAVM), 300-320 (IAFA…MLQV), and 349-369 (QVVA…LMTL).

This sequence belongs to the glycosyltransferase 4 family. MraY subfamily. It depends on Mg(2+) as a cofactor.

The protein resides in the cell inner membrane. The catalysed reaction is UDP-N-acetyl-alpha-D-muramoyl-L-alanyl-gamma-D-glutamyl-meso-2,6-diaminopimeloyl-D-alanyl-D-alanine + di-trans,octa-cis-undecaprenyl phosphate = di-trans,octa-cis-undecaprenyl diphospho-N-acetyl-alpha-D-muramoyl-L-alanyl-D-glutamyl-meso-2,6-diaminopimeloyl-D-alanyl-D-alanine + UMP. It functions in the pathway cell wall biogenesis; peptidoglycan biosynthesis. In terms of biological role, catalyzes the initial step of the lipid cycle reactions in the biosynthesis of the cell wall peptidoglycan: transfers peptidoglycan precursor phospho-MurNAc-pentapeptide from UDP-MurNAc-pentapeptide onto the lipid carrier undecaprenyl phosphate, yielding undecaprenyl-pyrophosphoryl-MurNAc-pentapeptide, known as lipid I. The protein is Phospho-N-acetylmuramoyl-pentapeptide-transferase of Psychrobacter cryohalolentis (strain ATCC BAA-1226 / DSM 17306 / VKM B-2378 / K5).